Here is a 283-residue protein sequence, read N- to C-terminus: Bifunctional protein FolD (283 aa).

NADP(+)-binding positions include 164 to 166 (GSS), Ile-189, and Ile-230.

Belongs to the tetrahydrofolate dehydrogenase/cyclohydrolase family. In terms of assembly, homodimer.

It carries out the reaction (6R)-5,10-methylene-5,6,7,8-tetrahydrofolate + NADP(+) = (6R)-5,10-methenyltetrahydrofolate + NADPH. The catalysed reaction is (6R)-5,10-methenyltetrahydrofolate + H2O = (6R)-10-formyltetrahydrofolate + H(+). It functions in the pathway one-carbon metabolism; tetrahydrofolate interconversion. Functionally, catalyzes the oxidation of 5,10-methylenetetrahydrofolate to 5,10-methenyltetrahydrofolate and then the hydrolysis of 5,10-methenyltetrahydrofolate to 10-formyltetrahydrofolate. The sequence is that of Bifunctional protein FolD from Fusobacterium nucleatum subsp. nucleatum (strain ATCC 25586 / DSM 15643 / BCRC 10681 / CIP 101130 / JCM 8532 / KCTC 2640 / LMG 13131 / VPI 4355).